Here is a 275-residue protein sequence, read N- to C-terminus: Cis-toluene dihydrodiol dehydrogenase (275 aa).

9–33 (LVTGGGAGLGRAIVDRYVAEGARVA) is an NAD(+) binding site. Ser142 is a binding site for substrate. Tyr155 (proton acceptor) is an active-site residue.

Belongs to the short-chain dehydrogenases/reductases (SDR) family.

The catalysed reaction is (1S,2R)-3-methylcyclohexa-3,5-diene-1,2-diol + NAD(+) = 3-methylcatechol + NADH + H(+). Its pathway is xenobiotic degradation; toluene degradation. This Pseudomonas putida (strain ATCC 700007 / DSM 6899 / JCM 31910 / BCRC 17059 / LMG 24140 / F1) protein is Cis-toluene dihydrodiol dehydrogenase (todD).